Here is a 187-residue protein sequence, read N- to C-terminus: Elongation factor P (187 aa).

Belongs to the elongation factor P family.

The protein localises to the cytoplasm. It participates in protein biosynthesis; polypeptide chain elongation. Its function is as follows. Involved in peptide bond synthesis. Stimulates efficient translation and peptide-bond synthesis on native or reconstituted 70S ribosomes in vitro. Probably functions indirectly by altering the affinity of the ribosome for aminoacyl-tRNA, thus increasing their reactivity as acceptors for peptidyl transferase. The chain is Elongation factor P from Desulfatibacillum aliphaticivorans.